The sequence spans 234 residues: Large ribosomal subunit protein uL1 (234 aa).

The protein belongs to the universal ribosomal protein uL1 family. As to quaternary structure, part of the 50S ribosomal subunit.

Its function is as follows. Binds directly to 23S rRNA. The L1 stalk is quite mobile in the ribosome, and is involved in E site tRNA release. In terms of biological role, protein L1 is also a translational repressor protein, it controls the translation of the L11 operon by binding to its mRNA. This chain is Large ribosomal subunit protein uL1, found in Cronobacter sakazakii (strain ATCC BAA-894) (Enterobacter sakazakii).